The sequence spans 396 residues: Proteinase-activated receptor 4 (396 aa).

A signal peptide spans Met1–Ser16. A propeptide spans Leu17–Arg59 (removed for receptor activation). The interval Asp28–Pro62 is disordered. Residues Glu46–Asn57 show a composition bias toward basic and acidic residues. At Gly60–Ala94 the chain is on the extracellular side. N-linked (GlcNAc...) asparagine glycosylation is present at Asn68. The helical transmembrane segment at Leu95–Ala115 threads the bilayer. At Thr116–Arg120 the chain is on the cytoplasmic side. The chain crosses the membrane as a helical span at residues Leu121–Leu141. At Pro142 to Arg162 the chain is on the extracellular side. An intrachain disulfide couples Cys161 to Cys240. A helical transmembrane segment spans residues Val163–Ser183. Over Leu184 to Arg203 the chain is Cytoplasmic. A helical membrane pass occupies residues Leu204–Thr224. The Extracellular segment spans residues Leu225 to Pro255. Residues Ala256–Tyr276 traverse the membrane as a helical segment. Residues Gly277 to Arg295 lie on the Cytoplasmic side of the membrane. A helical transmembrane segment spans residues Leu296–Val316. The Extracellular segment spans residues Leu317–Tyr331. The chain crosses the membrane as a helical span at residues Gly332 to Val355. Residues Ser356–Leu396 lie on the Cytoplasmic side of the membrane.

It belongs to the G-protein coupled receptor 1 family. Post-translationally, a proteolytic cleavage generates a new N-terminus that functions as a tethered ligand. As to expression, highly expressed in the spleen. Slight expression in the heart, lung, skeletal muscle and kidney. No detectable expression in brain, liver or testis. Also detected in platelets.

Its subcellular location is the cell membrane. In terms of biological role, receptor for activated thrombin or trypsin coupled to G proteins that stimulate phosphoinositide hydrolysis. May play a role in platelets activation. The polypeptide is Proteinase-activated receptor 4 (F2rl3) (Mus musculus (Mouse)).